Reading from the N-terminus, the 427-residue chain is Glutamate-1-semialdehyde 2,1-aminomutase (427 aa).

Lys265 carries the post-translational modification N6-(pyridoxal phosphate)lysine.

Belongs to the class-III pyridoxal-phosphate-dependent aminotransferase family. HemL subfamily. As to quaternary structure, homodimer. Requires pyridoxal 5'-phosphate as cofactor.

The protein localises to the cytoplasm. It carries out the reaction (S)-4-amino-5-oxopentanoate = 5-aminolevulinate. It participates in porphyrin-containing compound metabolism; protoporphyrin-IX biosynthesis; 5-aminolevulinate from L-glutamyl-tRNA(Glu): step 2/2. The polypeptide is Glutamate-1-semialdehyde 2,1-aminomutase (Bordetella avium (strain 197N)).